We begin with the raw amino-acid sequence, 60 residues long: Potassium channel toxin alpha-KTx 3.16 (60 aa).

Residues 1–23 (MKVFSAVLIILFVCSMIIGISEG) form the signal peptide. 3 cysteine pairs are disulfide-bonded: cysteine 30–cysteine 50, cysteine 36–cysteine 55, and cysteine 40–cysteine 57.

It belongs to the short scorpion toxin superfamily. Potassium channel inhibitor family. Alpha-KTx 03 subfamily. Expressed by the venom gland.

It localises to the secreted. Functionally, potassium channel inhibitor. This chain is Potassium channel toxin alpha-KTx 3.16, found in Mesobuthus gibbosus (Mediterranean checkered scorpion).